A 348-amino-acid polypeptide reads, in one-letter code: D-fructose 1,6-bisphosphatase class 2/sedoheptulose 1,7-bisphosphatase 2 (348 aa).

Mn(2+) is bound by residues aspartate 33, glutamate 57, aspartate 97, and glutamate 100. Residues 100-102 (EGT), tyrosine 131, 176-178 (RER), and 198-200 (DGD) each bind substrate. Glutamate 225 lines the Mn(2+) pocket.

Belongs to the FBPase class 2 family. Homotetramer.

The enzyme catalyses beta-D-fructose 1,6-bisphosphate + H2O = beta-D-fructose 6-phosphate + phosphate. It catalyses the reaction D-sedoheptulose 1,7-bisphosphate + H2O = D-sedoheptulose 7-phosphate + phosphate. It functions in the pathway carbohydrate biosynthesis; Calvin cycle. Functionally, catalyzes the hydrolysis of fructose 1,6-bisphosphate (Fru 1,6-P2) and sedoheptulose 1,7-bisphosphate (Sed 1,7-P2) to fructose 6-phosphate and sedoheptulose 7-phosphate, respectively. This chain is D-fructose 1,6-bisphosphatase class 2/sedoheptulose 1,7-bisphosphatase 2, found in Acaryochloris marina (strain MBIC 11017).